A 146-amino-acid chain; its full sequence is Deoxyuridine 5'-triphosphate nucleotidohydrolase (146 aa).

Residues 66–68 (RSG), Asn-79, 83–85 (TID), and Lys-93 each bind substrate.

This sequence belongs to the dUTPase family. It depends on Mg(2+) as a cofactor.

The catalysed reaction is dUTP + H2O = dUMP + diphosphate + H(+). Its pathway is pyrimidine metabolism; dUMP biosynthesis; dUMP from dCTP (dUTP route): step 2/2. Its function is as follows. This enzyme is involved in nucleotide metabolism: it produces dUMP, the immediate precursor of thymidine nucleotides and it decreases the intracellular concentration of dUTP so that uracil cannot be incorporated into DNA. The polypeptide is Deoxyuridine 5'-triphosphate nucleotidohydrolase (Zymomonas mobilis subsp. mobilis (strain ATCC 31821 / ZM4 / CP4)).